Consider the following 20-residue polypeptide: Cytochrome c oxidase subunit 6A1, mitochondrial (20 aa).

This sequence belongs to the cytochrome c oxidase subunit 6A family. In terms of assembly, component of the cytochrome c oxidase (complex IV, CIV), a multisubunit enzyme composed of 14 subunits. The complex is composed of a catalytic core of 3 subunits MT-CO1, MT-CO2 and MT-CO3, encoded in the mitochondrial DNA, and 11 supernumerary subunits COX4I, COX5A, COX5B, COX6A, COX6B, COX6C, COX7A, COX7B, COX7C, COX8 and NDUFA4, which are encoded in the nuclear genome. The complex exists as a monomer or a dimer and forms supercomplexes (SCs) in the inner mitochondrial membrane with NADH-ubiquinone oxidoreductase (complex I, CI) and ubiquinol-cytochrome c oxidoreductase (cytochrome b-c1 complex, complex III, CIII), resulting in different assemblies (supercomplex SCI(1)III(2)IV(1) and megacomplex MCI(2)III(2)IV(2)). In terms of tissue distribution, liver specific isoform.

It localises to the mitochondrion inner membrane. Its pathway is energy metabolism; oxidative phosphorylation. Component of the cytochrome c oxidase, the last enzyme in the mitochondrial electron transport chain which drives oxidative phosphorylation. The respiratory chain contains 3 multisubunit complexes succinate dehydrogenase (complex II, CII), ubiquinol-cytochrome c oxidoreductase (cytochrome b-c1 complex, complex III, CIII) and cytochrome c oxidase (complex IV, CIV), that cooperate to transfer electrons derived from NADH and succinate to molecular oxygen, creating an electrochemical gradient over the inner membrane that drives transmembrane transport and the ATP synthase. Cytochrome c oxidase is the component of the respiratory chain that catalyzes the reduction of oxygen to water. Electrons originating from reduced cytochrome c in the intermembrane space (IMS) are transferred via the dinuclear copper A center (CU(A)) of subunit 2 and heme A of subunit 1 to the active site in subunit 1, a binuclear center (BNC) formed by heme A3 and copper B (CU(B)). The BNC reduces molecular oxygen to 2 water molecules unsing 4 electrons from cytochrome c in the IMS and 4 protons from the mitochondrial matrix. This chain is Cytochrome c oxidase subunit 6A1, mitochondrial (COX6A1), found in Canis lupus familiaris (Dog).